The sequence spans 196 residues: Sulfur-rich protein (196 aa).

A run of 3 helical transmembrane segments spans residues 34 to 54 (VTAG…LIGW), 76 to 96 (ITLL…MFIF), and 105 to 125 (FWLI…SLCF).

The protein resides in the membrane. The chain is Sulfur-rich protein (srp) from Chlamydia pneumoniae (Chlamydophila pneumoniae).